We begin with the raw amino-acid sequence, 1129 residues long: CRISPR-associated endonuclease Cas12b (1129 aa).

Residues 1 to 14 (MAVKSIKVKLRLDD) are WED-I (OBD-I) domain. The interval 4-9 (KSIKVK) is binds sgRNA. The segment at 15–386 (MPEIRAGLWK…FATFTLPDAT (372 aa)) is REC1 (Helical-1)domain. 2 binds DNA protospacer adjacent motif (PAM) on target DNA regions span residues 118-122 (QQIAR) and 143-144 (GN). Residues 387–518 (AHPIWTRFDK…QSQSEARGER (132 aa)) are WED-II (OBD-II) domain. Residues 442-446 (SMSEQ) are binds sgRNA. Residues 519 to 628 (RPPYAAVFRL…LLKLPGETES (110 aa)) are ruvC-I domain. The active-site For DNase activity of RuvC domain is Asp-570. The segment at 573-574 (LR) is binds non-target ssDNA. A bridge helix domain region spans residues 629 to 658 (KDLRAIREERQRTLRQLRTQLAYLRLLVRC). Residues 659–784 (GSEDVGRRER…SFFGKVSGQV (126 aa)) are REC2 (Helical-II) domain. 5 binds sgRNA regions span residues 742–746 (RPKIR), 753–754 (VG), 792–796 (RFAIT), 800–819 (HIDH…IIME), and 835–839 (WVAKY). The interval 785–900 (IRAEKGSRFA…GTMYAAFSSR (116 aa)) is ruvC-II domain. The active-site For DNase activity of RuvC domain is the Glu-848. A binds non-target ssDNA region spans residues 897–900 (FSSR). Residues Ser-899 and Arg-911 each coordinate phosphate. The nuc-I domain stretch occupies residues 901–974 (FDARTGAPGI…SAEEGDFHQI (74 aa)). The segment at 973 to 978 (QIHADL) is binds sgRNA. A ruvC-III domain region spans residues 975–993 (HADLNAAQNLQQRLWSDFD). The active-site For DNase activity of RuvC domain is the Asp-977. The tract at residues 994 to 1129 (ISQIRLRCDW…DSACENTGDI (136 aa)) is nuc-II domain.

It belongs to the CRISPR-associated endonuclease Cas12b family. As to quaternary structure, monomer. A divalent metal cation serves as cofactor.

Functionally, CRISPR (clustered regularly interspaced short palindromic repeat), is an adaptive immune system that provides protection against mobile genetic elements (viruses, transposable elements and conjugative plasmids). CRISPR clusters contain sequences complementary to antecedent mobile elements and target invading nucleic acids. CRISPR clusters are transcribed and processed into CRISPR RNA (crRNA). In type II CRISPR systems correct processing of pre-crRNA requires a trans-encoded small RNA (tracrRNA), endogenous ribonuclease 3 (rnc) and this protein. The tracrRNA serves as a guide for ribonuclease 3-aided processing of pre-crRNA. Protein-crRNA-tracrRNA endonucleolytically cleave dsDNA target complementary to the spacer; protein is inactive in the absence of crRNA homologous to the target and tracrRNA. Recognizes a short motif in the CRISPR repeat sequences (the 5' PAM or protospacer adjacent motif, TTN in this organism) to help distinguish self versus nonself, as targets within the bacterial CRISPR locus do not have PAMs. PAM recognition is also required for catalytic activity. Cleavage results in staggered 6-8 base 5'-overhangs 14-17 and 23-24 bases downstream of the PAM (protospacer adjacent motif) on the non-target and target strands respectively. Both target and non-target strand DNA are probably independently cleaved in the same active site. In Alicyclobacillus acidoterrestris (strain ATCC 49025 / DSM 3922 / CIP 106132 / NCIMB 13137 / GD3B), this protein is CRISPR-associated endonuclease Cas12b.